A 469-amino-acid polypeptide reads, in one-letter code: Cysteine protease ATG4 (469 aa).

Residues 48 to 99 (KNIKADDHHPQTPPSVLKAETETQEAHDTAQPPNPPTNAPDTPPDSISSSFS) form a disordered region. Positions 66 to 75 (AETETQEAHD) are enriched in basic and acidic residues. Positions 79 to 90 (PPNPPTNAPDTP) are enriched in pro residues. The active-site Nucleophile is the Cys-172. Catalysis depends on residues Asp-362 and His-364. Positions 443-469 (GSSEGRESAIDEVETLSDDDTDTIHEA) are disordered. Acidic residues predominate over residues 452–463 (IDEVETLSDDDT).

It belongs to the peptidase C54 family. In terms of assembly, interacts with ATG8.

The protein resides in the cytoplasm. It is found in the nucleus. Its subcellular location is the preautophagosomal structure. The catalysed reaction is [protein]-C-terminal L-amino acid-glycyl-phosphatidylethanolamide + H2O = [protein]-C-terminal L-amino acid-glycine + a 1,2-diacyl-sn-glycero-3-phosphoethanolamine. In terms of biological role, cysteine protease that plays a key role in cytoplasm to vacuole transport (Cvt) and autophagy by mediating both proteolytic activation and delipidation of ATG8. Required for selective autophagic degradation of the nucleus (nucleophagy) as well as for mitophagy which contributes to regulate mitochondrial quantity and quality by eliminating the mitochondria to a basal level to fulfill cellular energy requirements and preventing excess ROS production. The protease activity is required for proteolytic activation of ATG8: cleaves the C-terminal amino acid of ATG8 to reveal a C-terminal glycine. ATG8 ubiquitin-like activity requires the exposure of the glycine at the C-terminus for its conjugation to phosphatidylethanolamine (PE) and its insertion to membranes, which is necessary for autophagy. The ATG8-PE conjugate mediates tethering between adjacent membranes and stimulates membrane hemifusion, leading to expansion of the autophagosomal membrane during autophagy. In addition to the protease activity, also catalyzes deconjugation of PE-conjugated forms of ATG8 during macroautophagy: ATG8 delipidation is required to release the protein from membranes, which facilitates multiple events during macroautophagy, and especially for efficient autophagosome biogenesis, the assembly of ATG9-containing tubulovesicular clusters into phagophores/autophagosomes, and for the disassembly of PAS-associated ATG components. ATG8 delipidation by ATG4 also recycles ATG8-PE generated on inappropriate membranes to maintain a reservoir of unlipidated ATG8 that is required for autophagosome formation at the PAS. Autophagy is required for proper vegetative growth, asexual/sexual reproduction, and full virulence. Autophagy is particularly involved in the biosynthesis of deoxynivalenol (DON), an important virulence determinant. In Gibberella zeae (strain ATCC MYA-4620 / CBS 123657 / FGSC 9075 / NRRL 31084 / PH-1) (Wheat head blight fungus), this protein is Cysteine protease ATG4.